The primary structure comprises 106 residues: Large ribosomal subunit protein bL21 (106 aa).

It belongs to the bacterial ribosomal protein bL21 family. In terms of assembly, part of the 50S ribosomal subunit. Contacts protein L20.

This protein binds to 23S rRNA in the presence of protein L20. The protein is Large ribosomal subunit protein bL21 of Xanthomonas oryzae pv. oryzae (strain MAFF 311018).